The sequence spans 429 residues: UDP-N-acetylglucosamine 1-carboxyvinyltransferase (429 aa).

22–23 (KN) is a phosphoenolpyruvate binding site. Arg102 contributes to the UDP-N-acetyl-alpha-D-glucosamine binding site. Cys126 serves as the catalytic Proton donor. The residue at position 126 (Cys126) is a 2-(S-cysteinyl)pyruvic acid O-phosphothioketal. Residues 131-135 (RPVDL), Asp316, and Ile338 each bind UDP-N-acetyl-alpha-D-glucosamine.

Belongs to the EPSP synthase family. MurA subfamily.

It localises to the cytoplasm. The enzyme catalyses phosphoenolpyruvate + UDP-N-acetyl-alpha-D-glucosamine = UDP-N-acetyl-3-O-(1-carboxyvinyl)-alpha-D-glucosamine + phosphate. Its pathway is cell wall biogenesis; peptidoglycan biosynthesis. Cell wall formation. Adds enolpyruvyl to UDP-N-acetylglucosamine. This Nitrobacter hamburgensis (strain DSM 10229 / NCIMB 13809 / X14) protein is UDP-N-acetylglucosamine 1-carboxyvinyltransferase.